The primary structure comprises 180 residues: Shikimate kinase (180 aa).

Residue glycine 14 to cysteine 19 participates in ATP binding. Residue threonine 18 coordinates Mg(2+). 3 residues coordinate substrate: aspartate 36, arginine 60, and glycine 82. Arginine 120 is an ATP binding site. Substrate is bound at residue arginine 139.

Belongs to the shikimate kinase family. As to quaternary structure, monomer. Mg(2+) serves as cofactor.

The protein resides in the cytoplasm. It carries out the reaction shikimate + ATP = 3-phosphoshikimate + ADP + H(+). The protein operates within metabolic intermediate biosynthesis; chorismate biosynthesis; chorismate from D-erythrose 4-phosphate and phosphoenolpyruvate: step 5/7. Its function is as follows. Catalyzes the specific phosphorylation of the 3-hydroxyl group of shikimic acid using ATP as a cosubstrate. This is Shikimate kinase from Stenotrophomonas maltophilia (strain R551-3).